Reading from the N-terminus, the 650-residue chain is Threonine--tRNA ligase (650 aa).

The 63-residue stretch at 3-65 (DLVKVTLPDG…DRDARLEIVT (63 aa)) folds into the TGS domain. The catalytic stretch occupies residues 248–548 (DHRRLGPQLG…LTEHYAGAFP (301 aa)). Zn(2+) is bound by residues C349, H400, and H525.

This sequence belongs to the class-II aminoacyl-tRNA synthetase family. Homodimer. Requires Zn(2+) as cofactor.

It localises to the cytoplasm. The catalysed reaction is tRNA(Thr) + L-threonine + ATP = L-threonyl-tRNA(Thr) + AMP + diphosphate + H(+). Functionally, catalyzes the attachment of threonine to tRNA(Thr) in a two-step reaction: L-threonine is first activated by ATP to form Thr-AMP and then transferred to the acceptor end of tRNA(Thr). Also edits incorrectly charged L-seryl-tRNA(Thr). The sequence is that of Threonine--tRNA ligase from Anaeromyxobacter dehalogenans (strain 2CP-C).